We begin with the raw amino-acid sequence, 218 residues long: E3 ubiquitin-protein ligase MARCHF3 (218 aa).

The RING-CH-type zinc finger occupies S63–E123. Zn(2+) contacts are provided by C71, C74, C87, C89, H97, C100, C113, and C116. Transmembrane regions (helical) follow at residues L145–L165 and L180–T200.

In terms of assembly, interacts with MARCHF2 and STX6.

Its subcellular location is the cytoplasmic vesicle membrane. It localises to the early endosome membrane. The catalysed reaction is S-ubiquitinyl-[E2 ubiquitin-conjugating enzyme]-L-cysteine + [acceptor protein]-L-lysine = [E2 ubiquitin-conjugating enzyme]-L-cysteine + N(6)-ubiquitinyl-[acceptor protein]-L-lysine.. Its pathway is protein modification; protein ubiquitination. Its function is as follows. E3 ubiquitin-protein ligase which may be involved in endosomal trafficking. E3 ubiquitin ligases accept ubiquitin from an E2 ubiquitin-conjugating enzyme in the form of a thioester and then directly transfer the ubiquitin to targeted substrates. The sequence is that of E3 ubiquitin-protein ligase MARCHF3 (Marchf3) from Mus musculus (Mouse).